Reading from the N-terminus, the 500-residue chain is Proline/betaine transporter (500 aa).

Topologically, residues 1–37 are cytoplasmic; sequence MLKRKKIKPITLGDVTIIDDGKLRKAITAASLGNAME. The chain crosses the membrane as a helical span at residues 38–58; sequence WFDFGVYGFVAYALGKVFFPG. Over 59–65 the chain is Periplasmic; sequence ADPSVQM. The helical transmembrane segment at 66–86 threads the bilayer; the sequence is IAALATFSVPFLIRPLGGLFF. At 87-97 the chain is on the cytoplasmic side; sequence GMLGDKYGRQK. The helical transmembrane segment at 98–118 threads the bilayer; sequence ILAITIVIMSISTFCIGLIPS. Residues 119-121 lie on the Periplasmic side of the membrane; the sequence is YAT. Residues 122–142 traverse the membrane as a helical segment; the sequence is IGIWAPILLLLCKMAQGFSVG. Over 143–169 the chain is Cytoplasmic; the sequence is GEYTGASIFVAEYSPDRKRGFMGSWLD. Residues 170–190 traverse the membrane as a helical segment; that stretch reads FGSIAGFVLGAGVVVLISTIV. The Periplasmic segment spans residues 191 to 194; sequence GEEN. Residues 195–215 form a helical membrane-spanning segment; that stretch reads FLEWGWRIPFFIALPLGIIGL. The Cytoplasmic portion of the chain corresponds to 216-260; it reads YLRHALEETPAFQQHVDKLEQGDREGLQDGPKVSFKEIATKHWRS. The chain crosses the membrane as a helical span at residues 261 to 281; that stretch reads LLSCIGLVIATNVTYYMLLTY. Residues 282–297 lie on the Periplasmic side of the membrane; the sequence is MPSYLSHNLHYSEDHG. Residues 298–318 form a helical membrane-spanning segment; that stretch reads VLIIIAIMIGMLFVQPVMGLL. Residues 319–325 lie on the Cytoplasmic side of the membrane; that stretch reads SDRFGRR. Residues 326 to 346 traverse the membrane as a helical segment; sequence PFVIMGSIALFALAIPAFILI. The Periplasmic portion of the chain corresponds to 347–350; sequence NSNV. The helical transmembrane segment at 351-371 threads the bilayer; it reads IGLIFAGLLMLAVILNCFTGV. Topologically, residues 372–390 are cytoplasmic; that stretch reads MASTLPAMFPTHIRYSALA. A helical membrane pass occupies residues 391–411; that stretch reads AAFNISVLIAGLTPTLAAWLV. The Periplasmic segment spans residues 412 to 416; the sequence is ESSQD. The helical transmembrane segment at 417–437 threads the bilayer; sequence LMMPAYYLMVIAVIGLITGIS. The Cytoplasmic portion of the chain corresponds to 438 to 500; it reads MKETANRPLK…LVQQHPRIDE (63 aa). A coiled-coil region spans residues 453–498; that stretch reads ASDIQEAKEILGEHYDNIEQKIDDIDQEIAELQVKRSRLVQQHPRI.

This sequence belongs to the major facilitator superfamily. Metabolite:H+ Symporter (MHS) family (TC 2.A.1.6) family.

It is found in the cell inner membrane. Functionally, proton symporter that senses osmotic shifts and responds by importing osmolytes such as proline, glycine betaine, stachydrine, pipecolic acid, ectoine and taurine. It is both an osmosensor and an osmoregulator which is available to participate early in the bacterial osmoregulatory response. This is Proline/betaine transporter (proP) from Salmonella typhimurium (strain LT2 / SGSC1412 / ATCC 700720).